We begin with the raw amino-acid sequence, 350 residues long: ADP-ribose pyrophosphatase, mitochondrial (350 aa).

Residues 1–46 (MAGRSLGKAVATVSLSVALASVTVRSSGCRAIPAPRNPFPSCGFHL) constitute a mitochondrion transit peptide. Disordered regions lie at residues 53–77 (GSNG…KVER) and 116–153 (SESS…PAGR). Residue Ser-121 is modified to Phosphoserine. The segment covering 124 to 135 (FNEKDGHVERKS) has biased composition (basic and acidic residues). The Nudix hydrolase domain maps to 178–334 (WKRDESGNKI…SQFIKLVAEK (157 aa)). Positions 215–237 (GMVDPGEKISATLKREFGEEALN) match the Nudix box motif.

This sequence belongs to the Nudix hydrolase family. NudF subfamily. As to quaternary structure, monomer. Interacts with GLOD4. It depends on Mg(2+) as a cofactor. The cofactor is Mn(2+).

It is found in the mitochondrion. It carries out the reaction ADP-D-ribose + H2O = D-ribose 5-phosphate + AMP + 2 H(+). Hydrolyzes ADP-ribose (ADPR) to AMP and ribose 5'-phosphate. This chain is ADP-ribose pyrophosphatase, mitochondrial (Nudt9), found in Rattus norvegicus (Rat).